We begin with the raw amino-acid sequence, 502 residues long: Probable cytosol aminopeptidase (502 aa).

Lys-265 and Asp-270 together coordinate Mn(2+). Residue Lys-277 is part of the active site. Mn(2+)-binding residues include Asp-288, Asp-347, and Glu-349. Arg-351 is an active-site residue.

This sequence belongs to the peptidase M17 family. Mn(2+) serves as cofactor.

It is found in the cytoplasm. It carries out the reaction Release of an N-terminal amino acid, Xaa-|-Yaa-, in which Xaa is preferably Leu, but may be other amino acids including Pro although not Arg or Lys, and Yaa may be Pro. Amino acid amides and methyl esters are also readily hydrolyzed, but rates on arylamides are exceedingly low.. The enzyme catalyses Release of an N-terminal amino acid, preferentially leucine, but not glutamic or aspartic acids.. Functionally, presumably involved in the processing and regular turnover of intracellular proteins. Catalyzes the removal of unsubstituted N-terminal amino acids from various peptides. The protein is Probable cytosol aminopeptidase of Rickettsia bellii (strain OSU 85-389).